We begin with the raw amino-acid sequence, 77 residues long: Translation initiation factor IF-1, chloroplastic (77 aa).

The region spanning 1-71 is the S1-like domain; the sequence is MKEQKLIHEG…TRGRIIYRLR (71 aa).

Belongs to the IF-1 family. Component of the 30S ribosomal translation pre-initiation complex which assembles on the 30S ribosome in the order IF-2 and IF-3, IF-1 and N-formylmethionyl-tRNA(fMet); mRNA recruitment can occur at any time during PIC assembly.

The protein localises to the plastid. It localises to the chloroplast. One of the essential components for the initiation of protein synthesis. Stabilizes the binding of IF-2 and IF-3 on the 30S subunit to which N-formylmethionyl-tRNA(fMet) subsequently binds. Helps modulate mRNA selection, yielding the 30S pre-initiation complex (PIC). Upon addition of the 50S ribosomal subunit IF-1, IF-2 and IF-3 are released leaving the mature 70S translation initiation complex. This is Translation initiation factor IF-1, chloroplastic from Phalaenopsis aphrodite subsp. formosana (Moth orchid).